We begin with the raw amino-acid sequence, 500 residues long: Matrilin-1 (500 aa).

Residues 1 to 29 (MKVTSGPAFALCSLLLLLLLLLQVPDSLS) form the signal peptide. Positions 30–226 (LVPQPRGHLC…AKKFQEAFCV (197 aa)) constitute a VWFA 1 domain. An N-linked (GlcNAc...) asparagine glycan is attached at Asn-80. Residues 227 to 267 (VSDLCATGDHDCEQLCVSSPGSYTCACHEGFTLNSDGKTCN) form the EGF-like domain. Cystine bridges form between Cys-231–Cys-242, Cys-238–Cys-251, and Cys-253–Cys-266. The VWFA 2 domain maps to 268–457 (VCRGGGSGSA…GKKLQKQICV (190 aa)). Residue Asn-348 is glycosylated (N-linked (GlcNAc...) asparagine). The stretch at 471–499 (EAKVEGLLQALTRKLEAVSGRLAVLENRI) forms a coiled coil.

Homotrimer. Part of a complex composed of MATN1 (via VWFA1 domain), type 2 collagens and type 6 collagens. Forms a complex (via covalent bonds) with ACAN; the interaction increases in abundance with increasing age of the organism via an increase in occupancy of MATN1 binding sites. Interacts with COMP. Post-translationally, N-glycosylated; reduces binding affinity for type 2 collagens. As to expression, expressed in femoral head articular cartilage. Expressed in the trachea and extraskeletal tissue around the eye.

It is found in the secreted. Its subcellular location is the extracellular space. The protein localises to the extracellular matrix. In terms of biological role, a major component of the extracellular matrix of non-articular cartilage. Binds to type 2 collagens and forms long concatenated protein networks as part of the extracellular matrix. Required for the network-like organization and bundling of collagen fibrils surrounding chondrocytes in the zones of maturation and hypertrophy. Required for mechanotransduction and adaption to mechanical loading in cartilage chondrocytes, resulting in an increase in expression of the extracellular matrix components ACAN and COL2A1. Acts as a moderator of angiogenesis in response to injury. The chain is Matrilin-1 from Mus musculus (Mouse).